The following is a 517-amino-acid chain: Aldehyde dehydrogenase, mitochondrial (517 aa).

The transit peptide at 1–17 (MLRAAARFGPRLGRRLL) directs the protein to the mitochondrion. Residues 9–24 (GPRLGRRLLSAAATQA) carry the SIFI-degron motif. N6-acetyllysine is present on residues Lys-52, Lys-73, Lys-78, and Lys-159. Residue 262-267 (GSTEIG) participates in NAD(+) binding. Catalysis depends on Glu-285, which acts as the Proton acceptor. Cys-319 (nucleophile) is an active-site residue. N6-acetyllysine is present on residues Lys-368, Lys-383, Lys-426, Lys-428, and Lys-451.

It belongs to the aldehyde dehydrogenase family. Homotetramer. Post-translationally, in response to mitochondrial stress, the precursor protein is ubiquitinated by the SIFI complex in the cytoplasm before mitochondrial import, leading to its degradation. Within the SIFI complex, UBR4 initiates ubiquitin chain that are further elongated or branched by KCMF1.

It is found in the mitochondrion matrix. The catalysed reaction is an aldehyde + NAD(+) + H2O = a carboxylate + NADH + 2 H(+). The protein operates within alcohol metabolism; ethanol degradation; acetate from ethanol: step 2/2. Functionally, required for clearance of cellular formaldehyde, a cytotoxic and carcinogenic metabolite that induces DNA damage. The chain is Aldehyde dehydrogenase, mitochondrial (ALDH2) from Homo sapiens (Human).